Consider the following 74-residue polypeptide: Protein SspS (74 aa).

The protein belongs to the alpha/beta-type SASP family.

This is Protein SspS (sspS) from Streptococcus pyogenes.